We begin with the raw amino-acid sequence, 159 residues long: uncharacterized protein (159 aa).

Its subcellular location is the mitochondrion. This is an uncharacterized protein from Arabidopsis thaliana (Mouse-ear cress).